Here is an 86-residue protein sequence, read N- to C-terminus: MNSKIFAVLLLLALLSCVLSDQYCPKSSITACKKMNIRNDCCKDDDCTGGSWCCATPCGNFCKYPTDRPGGKRAAGGKSCKTGYVY.

The N-terminal stretch at 1 to 20 (MNSKIFAVLLLLALLSCVLS) is a signal peptide. Residues 21 to 66 (DQYCPKSSITACKKMNIRNDCCKDDDCTGGSWCCATPCGNFCKYPT) enclose the WAP domain. 5 cysteine pairs are disulfide-bonded: cysteine 24/cysteine 54, cysteine 32/cysteine 58, cysteine 41/cysteine 53, cysteine 42/cysteine 80, and cysteine 47/cysteine 62.

The protein belongs to the venom protein 11 family. 01 (wap-1) subfamily. In terms of processing, contains 5 disulfide bonds. In terms of tissue distribution, expressed by the venom gland.

The protein localises to the secreted. Functionally, has antibacterial activity. In Lycosa singoriensis (Wolf spider), this protein is U15-lycotoxin-Ls1d.